The following is a 273-amino-acid chain: tRNA pseudouridine synthase A (273 aa).

The Nucleophile role is filled by aspartate 52. Tyrosine 110 provides a ligand contact to substrate.

Belongs to the tRNA pseudouridine synthase TruA family. In terms of assembly, homodimer.

It carries out the reaction uridine(38/39/40) in tRNA = pseudouridine(38/39/40) in tRNA. In terms of biological role, formation of pseudouridine at positions 38, 39 and 40 in the anticodon stem and loop of transfer RNAs. The protein is tRNA pseudouridine synthase A of Cupriavidus pinatubonensis (strain JMP 134 / LMG 1197) (Cupriavidus necator (strain JMP 134)).